The sequence spans 107 residues: Cytochrome c2 (107 aa).

Q1 bears the Pyrrolidone carboxylic acid mark. Heme c is bound by residues C13, C16, H17, and M79.

It belongs to the cytochrome c family. In terms of processing, binds 1 heme c group covalently per subunit.

It localises to the periplasm. Cytochrome c2 is found mainly in purple, non-sulfur, photosynthetic bacteria where it functions as the electron donor to the oxidized bacteriochlorophyll in the photophosphorylation pathway. However, it may also have a role in the respiratory chain and is found in some non-photosynthetic bacteria. The protein is Cytochrome c2 of Rhodoplanes tepidamans (Rhodoplanes cryptolactis).